Here is a 218-residue protein sequence, read N- to C-terminus: Phosphoglycolate phosphatase (218 aa).

Residue Asp7 is the Nucleophile of the active site. Positions 7, 9, and 167 each coordinate Mg(2+).

The protein belongs to the HAD-like hydrolase superfamily. CbbY/CbbZ/Gph/YieH family. Mg(2+) is required as a cofactor.

It carries out the reaction 2-phosphoglycolate + H2O = glycolate + phosphate. Its pathway is organic acid metabolism; glycolate biosynthesis; glycolate from 2-phosphoglycolate: step 1/1. Functionally, specifically catalyzes the dephosphorylation of 2-phosphoglycolate. Is involved in the dissimilation of the intracellular 2-phosphoglycolate formed during the DNA repair of 3'-phosphoglycolate ends, a major class of DNA lesions induced by oxidative stress. In Cereibacter sphaeroides (strain ATCC 17029 / ATH 2.4.9) (Rhodobacter sphaeroides), this protein is Phosphoglycolate phosphatase.